Here is a 156-residue protein sequence, read N- to C-terminus: tRNA (cytidine(34)-2'-O)-methyltransferase (156 aa).

S-adenosyl-L-methionine is bound by residues Gly100, Ile122, and Ser130.

It belongs to the class IV-like SAM-binding methyltransferase superfamily. RNA methyltransferase TrmH family. TrmL subfamily. As to quaternary structure, homodimer.

The protein localises to the cytoplasm. It carries out the reaction cytidine(34) in tRNA + S-adenosyl-L-methionine = 2'-O-methylcytidine(34) in tRNA + S-adenosyl-L-homocysteine + H(+). The enzyme catalyses 5-carboxymethylaminomethyluridine(34) in tRNA(Leu) + S-adenosyl-L-methionine = 5-carboxymethylaminomethyl-2'-O-methyluridine(34) in tRNA(Leu) + S-adenosyl-L-homocysteine + H(+). In terms of biological role, methylates the ribose at the nucleotide 34 wobble position in the two leucyl isoacceptors tRNA(Leu)(CmAA) and tRNA(Leu)(cmnm5UmAA). Catalyzes the methyl transfer from S-adenosyl-L-methionine to the 2'-OH of the wobble nucleotide. This is tRNA (cytidine(34)-2'-O)-methyltransferase from Aeromonas hydrophila subsp. hydrophila (strain ATCC 7966 / DSM 30187 / BCRC 13018 / CCUG 14551 / JCM 1027 / KCTC 2358 / NCIMB 9240 / NCTC 8049).